A 35-amino-acid polypeptide reads, in one-letter code: PTEN upstream open reading frame MP31 (35 aa).

Interacts with lactate dehydrogenases LDHA and LDHB; interaction with mitochondrial LDH leads to inhibition of lactate dehydrogenase activity, preventing conversion of lactate to pyruvate. As to expression, detected in brain, kidney and liver (at protein level).

It is found in the mitochondrion. Its function is as follows. Inhibits lactate dehydrogenase (LDH)-mediated conversion of lactate to pyruvate in mitochondria by competing with mitochondrial LDH for binding to NAD(+). Also inhibits cellular lactate utilization. The chain is PTEN upstream open reading frame MP31 from Mus musculus (Mouse).